A 188-amino-acid chain; its full sequence is Elongation factor P (188 aa).

It belongs to the elongation factor P family.

It localises to the cytoplasm. The protein operates within protein biosynthesis; polypeptide chain elongation. Involved in peptide bond synthesis. Stimulates efficient translation and peptide-bond synthesis on native or reconstituted 70S ribosomes in vitro. Probably functions indirectly by altering the affinity of the ribosome for aminoacyl-tRNA, thus increasing their reactivity as acceptors for peptidyl transferase. This chain is Elongation factor P, found in Phocaeicola vulgatus (strain ATCC 8482 / DSM 1447 / JCM 5826 / CCUG 4940 / NBRC 14291 / NCTC 11154) (Bacteroides vulgatus).